A 541-amino-acid chain; its full sequence is Chaperonin GroEL (541 aa).

ATP contacts are provided by residues 29 to 32 (TLGP), 86 to 90 (DGTTT), Gly-413, 476 to 478 (NAA), and Asp-492. The segment at 521 to 541 (KPEDNPAPAAPAANPGMGGMM) is disordered. The span at 526–535 (PAPAAPAANP) shows a compositional bias: low complexity.

It belongs to the chaperonin (HSP60) family. Forms a cylinder of 14 subunits composed of two heptameric rings stacked back-to-back. Interacts with the co-chaperonin GroES.

The protein localises to the cytoplasm. The enzyme catalyses ATP + H2O + a folded polypeptide = ADP + phosphate + an unfolded polypeptide.. Functionally, together with its co-chaperonin GroES, plays an essential role in assisting protein folding. The GroEL-GroES system forms a nano-cage that allows encapsulation of the non-native substrate proteins and provides a physical environment optimized to promote and accelerate protein folding. The sequence is that of Chaperonin GroEL from Levilactobacillus brevis (strain ATCC 367 / BCRC 12310 / CIP 105137 / JCM 1170 / LMG 11437 / NCIMB 947 / NCTC 947) (Lactobacillus brevis).